Consider the following 356-residue polypeptide: sn-glycerol-3-phosphate import ATP-binding protein UgpC (356 aa).

One can recognise an ABC transporter domain in the interval 4 to 235; it reads LKLQAVTKSW…PASRFVASFI (232 aa). Residue 37–44 participates in ATP binding; the sequence is GPSGCGKS.

It belongs to the ABC transporter superfamily. sn-glycerol-3-phosphate importer (TC 3.A.1.1.3) family. The complex is composed of two ATP-binding proteins (UgpC), two transmembrane proteins (UgpA and UgpE) and a solute-binding protein (UgpB).

It localises to the cell inner membrane. The catalysed reaction is sn-glycerol 3-phosphate(out) + ATP + H2O = sn-glycerol 3-phosphate(in) + ADP + phosphate + H(+). In terms of biological role, part of the ABC transporter complex UgpBAEC involved in sn-glycerol-3-phosphate (G3P) import. Responsible for energy coupling to the transport system. In Salmonella choleraesuis (strain SC-B67), this protein is sn-glycerol-3-phosphate import ATP-binding protein UgpC.